The sequence spans 330 residues: Peroxidase 70 (330 aa).

An N-terminal signal peptide occupies residues 1–24 (MRSFTNLNPCYVLLPFFLVLATNA). Disulfide bonds link Cys-43–Cys-119, Cys-76–Cys-81, Cys-125–Cys-326, and Cys-202–Cys-234. His-74 (proton acceptor) is an active-site residue. Ca(2+) is bound by residues Asp-75, Val-78, Gly-80, Asp-82, and Ser-84. A substrate-binding site is contributed by Pro-165. Residue His-195 participates in heme b binding. Position 196 (Thr-196) interacts with Ca(2+). Ca(2+) contacts are provided by Asp-247, Ser-250, and Asp-255.

It belongs to the peroxidase family. Classical plant (class III) peroxidase subfamily. Requires heme b as cofactor. The cofactor is Ca(2+).

It localises to the secreted. It carries out the reaction 2 a phenolic donor + H2O2 = 2 a phenolic radical donor + 2 H2O. Functionally, removal of H(2)O(2), oxidation of toxic reductants, biosynthesis and degradation of lignin, suberization, auxin catabolism, response to environmental stresses such as wounding, pathogen attack and oxidative stress. These functions might be dependent on each isozyme/isoform in each plant tissue. In Arabidopsis thaliana (Mouse-ear cress), this protein is Peroxidase 70 (PER70).